A 611-amino-acid chain; its full sequence is Aspartate--tRNA ligase, mitochondrial (611 aa).

A mitochondrion-targeting transit peptide spans 1 to 30 (MVLSRLPACLLPLVGTKVSIQGWLVATSRQ). Residue Glu-192 coordinates L-aspartate. The aspartate stretch occupies residues 216 to 219 (QQYK). Arg-238 contributes to the L-aspartate binding site. ATP is bound by residues 238-240 (RDE) and Glu-502. Residue Arg-509 coordinates L-aspartate. 554–557 (GFDR) is a binding site for ATP.

The protein belongs to the class-II aminoacyl-tRNA synthetase family. Type 1 subfamily.

The protein resides in the mitochondrion. The enzyme catalyses tRNA(Asp) + L-aspartate + ATP = L-aspartyl-tRNA(Asp) + AMP + diphosphate. The protein is Aspartate--tRNA ligase, mitochondrial (msd1) of Schizosaccharomyces pombe (strain 972 / ATCC 24843) (Fission yeast).